Reading from the N-terminus, the 376-residue chain is Succinyl-diaminopimelate desuccinylase (376 aa).

Residue His67 participates in Zn(2+) binding. Asp69 is a catalytic residue. Asp100 is a Zn(2+) binding site. The active-site Proton acceptor is the Glu134. Zn(2+) is bound by residues Glu135, Glu163, and His349.

It belongs to the peptidase M20A family. DapE subfamily. Homodimer. It depends on Zn(2+) as a cofactor. The cofactor is Co(2+).

It catalyses the reaction N-succinyl-(2S,6S)-2,6-diaminopimelate + H2O = (2S,6S)-2,6-diaminopimelate + succinate. It functions in the pathway amino-acid biosynthesis; L-lysine biosynthesis via DAP pathway; LL-2,6-diaminopimelate from (S)-tetrahydrodipicolinate (succinylase route): step 3/3. In terms of biological role, catalyzes the hydrolysis of N-succinyl-L,L-diaminopimelic acid (SDAP), forming succinate and LL-2,6-diaminopimelate (DAP), an intermediate involved in the bacterial biosynthesis of lysine and meso-diaminopimelic acid, an essential component of bacterial cell walls. The sequence is that of Succinyl-diaminopimelate desuccinylase from Xanthomonas campestris pv. campestris (strain 8004).